Consider the following 108-residue polypeptide: Thiosulfate sulfurtransferase GlpE (108 aa).

The Rhodanese domain maps to 17–105 (QEKEAVLVDI…WQRQFPAEVA (89 aa)). Cysteine 65 acts as the Cysteine persulfide intermediate in catalysis.

The protein belongs to the GlpE family.

Its subcellular location is the cytoplasm. It carries out the reaction thiosulfate + hydrogen cyanide = thiocyanate + sulfite + 2 H(+). The enzyme catalyses thiosulfate + [thioredoxin]-dithiol = [thioredoxin]-disulfide + hydrogen sulfide + sulfite + 2 H(+). Its function is as follows. Transferase that catalyzes the transfer of sulfur from thiosulfate to thiophilic acceptors such as cyanide or dithiols. May function in a CysM-independent thiosulfate assimilation pathway by catalyzing the conversion of thiosulfate to sulfite, which can then be used for L-cysteine biosynthesis. The sequence is that of Thiosulfate sulfurtransferase GlpE from Escherichia coli O8 (strain IAI1).